A 792-amino-acid polypeptide reads, in one-letter code: Phenylalanine--tRNA ligase beta subunit (792 aa).

A tRNA-binding domain is found at 39 to 150; the sequence is GDEITNVVTG…ENTPIGKDIK (112 aa). Residues 404–479 form the B5 domain; the sequence is SEPNIVEVDY…RIYGYNKVPS (76 aa). D457, D463, E466, and E467 together coordinate Mg(2+). The region spanning 699–792 is the FDX-ACB domain; sequence PKFPTVTRDI…LEHVLGAELR (94 aa).

This sequence belongs to the phenylalanyl-tRNA synthetase beta subunit family. Type 1 subfamily. In terms of assembly, tetramer of two alpha and two beta subunits. The cofactor is Mg(2+).

The protein resides in the cytoplasm. It carries out the reaction tRNA(Phe) + L-phenylalanine + ATP = L-phenylalanyl-tRNA(Phe) + AMP + diphosphate + H(+). The sequence is that of Phenylalanine--tRNA ligase beta subunit from Clostridium acetobutylicum (strain ATCC 824 / DSM 792 / JCM 1419 / IAM 19013 / LMG 5710 / NBRC 13948 / NRRL B-527 / VKM B-1787 / 2291 / W).